The primary structure comprises 301 residues: Glycine--tRNA ligase alpha subunit (301 aa).

The protein belongs to the class-II aminoacyl-tRNA synthetase family. Tetramer of two alpha and two beta subunits.

It is found in the cytoplasm. It catalyses the reaction tRNA(Gly) + glycine + ATP = glycyl-tRNA(Gly) + AMP + diphosphate. The chain is Glycine--tRNA ligase alpha subunit from Campylobacter hominis (strain ATCC BAA-381 / DSM 21671 / CCUG 45161 / LMG 19568 / NCTC 13146 / CH001A).